Reading from the N-terminus, the 37-residue chain is Large ribosomal subunit protein bL36 (37 aa).

This sequence belongs to the bacterial ribosomal protein bL36 family.

The chain is Large ribosomal subunit protein bL36 from Geobacillus kaustophilus (strain HTA426).